Consider the following 263-residue polypeptide: 3-deoxy-manno-octulosonate cytidylyltransferase (263 aa).

Belongs to the KdsB family.

It localises to the cytoplasm. It catalyses the reaction 3-deoxy-alpha-D-manno-oct-2-ulosonate + CTP = CMP-3-deoxy-beta-D-manno-octulosonate + diphosphate. The protein operates within nucleotide-sugar biosynthesis; CMP-3-deoxy-D-manno-octulosonate biosynthesis; CMP-3-deoxy-D-manno-octulosonate from 3-deoxy-D-manno-octulosonate and CTP: step 1/1. It participates in bacterial outer membrane biogenesis; lipopolysaccharide biosynthesis. In terms of biological role, activates KDO (a required 8-carbon sugar) for incorporation into bacterial lipopolysaccharide in Gram-negative bacteria. This Burkholderia multivorans (strain ATCC 17616 / 249) protein is 3-deoxy-manno-octulosonate cytidylyltransferase.